Consider the following 237-residue polypeptide: Uridylate kinase (237 aa).

12-15 lines the ATP pocket; sequence KLSG. The interval 20–25 is involved in allosteric activation by GTP; that stretch reads GEDGLG. G54 is a UMP binding site. ATP contacts are provided by G55 and R59. UMP is bound by residues D74 and 135–142; that span reads TGNPFFTT. T162, Y168, and D171 together coordinate ATP.

It belongs to the UMP kinase family. As to quaternary structure, homohexamer.

The protein resides in the cytoplasm. It catalyses the reaction UMP + ATP = UDP + ADP. The protein operates within pyrimidine metabolism; CTP biosynthesis via de novo pathway; UDP from UMP (UMPK route): step 1/1. Allosterically activated by GTP. Inhibited by UTP. In terms of biological role, catalyzes the reversible phosphorylation of UMP to UDP. The sequence is that of Uridylate kinase from Haemophilus influenzae (strain PittEE).